A 445-amino-acid chain; its full sequence is Peptide chain release factor 1, mitochondrial (445 aa).

Residues 1–61 constitute a mitochondrion transit peptide; sequence MNRHLCVWLF…LLSKNWSRRY (61 aa). The GGQ domain stretch occupies residues 297–361; it reads PKDLRIDTFR…LRARLYQQII (65 aa). Positions 311 to 313 match the GGQ motif; the sequence is GGQ. Gln313 is subject to N5-methylglutamine.

The protein belongs to the prokaryotic/mitochondrial release factor family. Post-translationally, methylation of glutamine in the GGQ triplet by HEMK1 is conserved from bacteria to mammals.

Its subcellular location is the mitochondrion. Its function is as follows. Mitochondrial peptide chain release factor that directs the termination of translation in response to the peptide chain non-canonical stop codons AGG and AGA. Non-canonical termination codons AGG and AGA are found at the end of MT-CO1/COX1 and MT-ND6/ND6 open reading frames, respectively. Recognizes non-canonical stop codons via a network of interactions between the codon, MTRF1 and the ribosomal RNA (rRNA): in contrast to other translation release factors, which identify the codon in the A-site via direct interactions of amino acid side chains with the bases, MTRF1 repositions the first 2 bases of the stop codon to use an intricate network of interactions that includes residues of the release factor, the rRNA of the small ribosomal subunit, as well as neighboring bases of the mRNA. The polypeptide is Peptide chain release factor 1, mitochondrial (Homo sapiens (Human)).